A 60-amino-acid chain; its full sequence is Metallothionein-like protein EMB30 (60 aa).

This sequence belongs to the metallothionein superfamily. Type 15 family.

In terms of biological role, metallothioneins have a high content of cysteine residues that bind various heavy metals. In Picea glauca (White spruce), this protein is Metallothionein-like protein EMB30 (EMB30).